Consider the following 364-residue polypeptide: Histidinol-phosphate aminotransferase (364 aa).

The residue at position 226 (lysine 226) is an N6-(pyridoxal phosphate)lysine.

It belongs to the class-II pyridoxal-phosphate-dependent aminotransferase family. Histidinol-phosphate aminotransferase subfamily. In terms of assembly, homodimer. The cofactor is pyridoxal 5'-phosphate.

The catalysed reaction is L-histidinol phosphate + 2-oxoglutarate = 3-(imidazol-4-yl)-2-oxopropyl phosphate + L-glutamate. It functions in the pathway amino-acid biosynthesis; L-histidine biosynthesis; L-histidine from 5-phospho-alpha-D-ribose 1-diphosphate: step 7/9. The sequence is that of Histidinol-phosphate aminotransferase from Campylobacter jejuni subsp. jejuni serotype O:2 (strain ATCC 700819 / NCTC 11168).